Consider the following 369-residue polypeptide: Cobalt-precorrin-5B C(1)-methyltransferase (369 aa).

It belongs to the CbiD family.

It catalyses the reaction Co-precorrin-5B + S-adenosyl-L-methionine = Co-precorrin-6A + S-adenosyl-L-homocysteine. The protein operates within cofactor biosynthesis; adenosylcobalamin biosynthesis; cob(II)yrinate a,c-diamide from sirohydrochlorin (anaerobic route): step 6/10. Catalyzes the methylation of C-1 in cobalt-precorrin-5B to form cobalt-precorrin-6A. This chain is Cobalt-precorrin-5B C(1)-methyltransferase, found in Brucella melitensis biotype 1 (strain ATCC 23456 / CCUG 17765 / NCTC 10094 / 16M).